The following is a 271-amino-acid chain: L-aspartate dehydrogenase (271 aa).

Residues A124 and N192 each coordinate NAD(+). The active site involves H222.

It belongs to the L-aspartate dehydrogenase family.

The catalysed reaction is L-aspartate + NADP(+) + H2O = oxaloacetate + NH4(+) + NADPH + H(+). It carries out the reaction L-aspartate + NAD(+) + H2O = oxaloacetate + NH4(+) + NADH + H(+). It participates in cofactor biosynthesis; NAD(+) biosynthesis; iminoaspartate from L-aspartate (dehydrogenase route): step 1/1. In terms of biological role, specifically catalyzes the NAD or NADP-dependent dehydrogenation of L-aspartate to iminoaspartate. This is L-aspartate dehydrogenase from Methanosarcina mazei (strain ATCC BAA-159 / DSM 3647 / Goe1 / Go1 / JCM 11833 / OCM 88) (Methanosarcina frisia).